The chain runs to 178 residues: MCIQPNDNWQWHYDAHDDRLMLDLSDRMIFATEYKGRQLVPSSFTTQPFCVDDAALYYQLMDRVAELEWSVPHQVQLVLNAIAVSRFYKPLMPQSWFFGETHPAIIPETGALVCMGTPHGKGEFLVIEAGEQASVCLNLTDDLILTTSKTLPRFGVIKVMNNRMSPRPVAQAQYRQVS.

It belongs to the ZapC family. Interacts directly with FtsZ.

Its subcellular location is the cytoplasm. Functionally, contributes to the efficiency of the cell division process by stabilizing the polymeric form of the cell division protein FtsZ. Acts by promoting interactions between FtsZ protofilaments and suppressing the GTPase activity of FtsZ. In Aeromonas hydrophila subsp. hydrophila (strain ATCC 7966 / DSM 30187 / BCRC 13018 / CCUG 14551 / JCM 1027 / KCTC 2358 / NCIMB 9240 / NCTC 8049), this protein is Cell division protein ZapC.